The primary structure comprises 358 residues: uncharacterized protein (358 aa).

Positions 324 to 358 are disordered; it reads DMEVEETPPTTNKDLPRGATQPKRNSIKRVSKLID. A compositionally biased stretch (basic residues) spans 348–358; the sequence is NSIKRVSKLID.

This is an uncharacterized protein from Mycoplasma pneumoniae (strain ATCC 29342 / M129 / Subtype 1) (Mycoplasmoides pneumoniae).